We begin with the raw amino-acid sequence, 2081 residues long: Non-reducing polyketide synthase terA (2081 aa).

An N-terminal acylcarrier protein transacylase (SAT) domain (SAT) region spans residues 85 to 190 (TLTLAFRIGV…ISLDIFAPFH (106 aa)). The 434-residue stretch at 316–749 (AQKIAIVGMA…GGNTGLLLED (434 aa)) folds into the Ketosynthase family 3 (KS3) domain. Active-site for beta-ketoacyl synthase activity residues include Cys488, His623, and His667. Residues 849 to 1147 (LFTGQGSHYT…LTLPSLRKQE (299 aa)) form a malonyl-CoA:ACP transacylase (MAT) domain region. The N-terminal hotdog fold stretch occupies residues 1230–1364 (QKVIKEDFGQ…CHVEYGDIKT (135 aa)). The PKS/mFAS DH domain maps to 1230–1539 (QKVIKEDFGQ…FKAIPRAVIN (310 aa)). The segment at 1259 to 1536 (VTGHLVNGSA…GVKFKAIPRA (278 aa)) is product template (PT) domain. The active-site Proton acceptor; for dehydratase activity is the His1262. The interval 1392–1539 (YQKLDRKAAY…FKAIPRAVIN (148 aa)) is C-terminal hotdog fold. Catalysis depends on Asp1452, which acts as the Proton donor; for dehydratase activity. The tract at residues 1549–1578 (KALEKSAPRQNPKATATKTTQKPQAPVPVP) is disordered. Residues 1558–1572 (QNPKATATKTTQKPQ) show a composition bias toward low complexity. Residues 1580–1658 (KQNKAIIDDF…QVKELILKLA (79 aa)) enclose the Carrier 1 domain. An O-(pantetheine 4'-phosphoryl)serine modification is found at Ser1617. The disordered stretch occupies residues 1659–1700 (GSSSDENTTDTPDEEEDPATADADNTEMIRENPLESVSPNVS). Over residues 1665-1677 (NTTDTPDEEEDPA) the composition is skewed to acidic residues. In terms of domain architecture, Carrier 2 spans 1699–1776 (VSSSEAMDGF…QARLAIASLM (78 aa)). Residue Ser1736 is modified to O-(pantetheine 4'-phosphoryl)serine. A disordered region spans residues 1783–1809 (GATTPYSGSDDAKSSTSSLTAGSVLTP). Residues 1840–2070 (TLFLLPDGSG…TMMREPKVNQ (231 aa)) are thioesterase (TE) domain.

It carries out the reaction 3 malonyl-CoA + acetyl-CoA + 2 H(+) = orsellinate + 3 CO2 + 4 CoA. It participates in secondary metabolite biosynthesis. Functionally, non-reducing polyketide synthase; part of the gene cluster that mediates the biosynthesis of terrein, a fungal metabolite with ecological, antimicrobial, antiproliferative, and antioxidative activities. The first step in the pathway is performed by the polyketide synthase terA that produces 4-hydroxy-6-methylpyranon (4-HMP), orsellinic acid (OA), and 2,3-dehydro-6-hydroxymellein (2,3-dehydro-6-HM) by condensing acetyl-CoA with two, three, or four malonyl-CoA units, respectively. 4-HMP and OA are not pathway intermediates, but are rather shunt or side products. 2,3-dehydro-6-HM is further converted to 6-hydroxymellein (6-HM) by the 6-hydroxymellein synthase terB. The monooxygenases terC and terD, the multicopper oxidase terE and the Kelch-like protein terF are then involved in the transformation of 6-HM to terrein. Even if they are co-regulated with the other terrein cluster genes, terH and terI seem to be dispensable for terrein production; whereas one or both of the 2 transporters terG and terJ are probably required for efficient secretion of metabolites. In Aspergillus terreus (strain NIH 2624 / FGSC A1156), this protein is Non-reducing polyketide synthase terA.